Here is a 340-residue protein sequence, read N- to C-terminus: Chitinase 7 (340 aa).

Residues 1 to 32 (MIAARAANLQVAMKALALAVLALAYAAATARA) form the signal peptide. Residues 33–73 (EQCGRQAGGARCPNRLCCSRWGWCGLTDDYCKGGCQSQCRV) form the Chitin-binding type-1 domain. Cystine bridges form between cysteine 35–cysteine 50, cysteine 44–cysteine 56, cysteine 49–cysteine 63, cysteine 67–cysteine 71, cysteine 118–cysteine 173, cysteine 185–cysteine 193, and cysteine 293–cysteine 323.

This sequence belongs to the glycosyl hydrolase 19 family. Chitinase class I subfamily. Expressed in pistils, stamens and lodicules.

The enzyme catalyses Random endo-hydrolysis of N-acetyl-beta-D-glucosaminide (1-&gt;4)-beta-linkages in chitin and chitodextrins.. In terms of biological role, hydrolyzes chitin and may play a role in defense against fungal pathogens containing chitin. The sequence is that of Chitinase 7 (Cht7) from Oryza sativa subsp. indica (Rice).